The primary structure comprises 425 residues: Paired box pox-neuro protein (425 aa).

Residues 5–132 (GQAGVNQLGG…SSINRILRNS (128 aa)) constitute a DNA-binding region (paired). Positions 8 to 64 (GVNQLGGVFVNGRPLPDCVRRRIVDLALCGVRPCDISRQLLVSHGCVSKILTRFYET) are PAI subdomain. The tract at residues 84–132 (TVVKKIIRLKEENSGMFAWEIREQLQQQRVCDPSSVPSISSINRILRNS) is RED subdomain. Disordered regions lie at residues 159 to 188 (QAGSGPSNGYGGQAPPPPVTVAPPTPAATP), 297 to 358 (TKSE…RKRN), and 383 to 425 (LESS…EVVN). A compositionally biased stretch (pro residues) spans 172–185 (APPPPVTVAPPTPA). Composition is skewed to low complexity over residues 323–332 (SSPAALSLTA) and 340–349 (GSAPEASPGS). Acidic residues predominate over residues 402–425 (TPEDEDPAEAEEEQEEEDSVEVVN).

In terms of tissue distribution, central and peripheral nervous systems.

The protein resides in the nucleus. Functionally, transcriptional regulator that specifies poly-innervated organs (chemosensory bristle). Also controls the number of neurons. This is Paired box pox-neuro protein (Poxn) from Drosophila melanogaster (Fruit fly).